We begin with the raw amino-acid sequence, 463 residues long: MEKPSREAFEGNNKLLIGIVLSVITFWLFAQSLVNVVPILEDSFNTDIGTVNIAVSITALFSGMFVVGAGGLADKYGRIKLTNIGIILNILGSLLIIISNIPLLLIIGRLIQGLSAACIMPATLSIIKSYYIGKDRQRALSYWSIGSWGGSGVCSFFGGAVATLLGWRWIFILSIIISLIALFLIKGTPETKSKSISLNKFDIKGLVLLVIMLLSLNILITKGSELGVSSLLFITLLAIAIGSFSLFIVLEKRATNPLIDFKLFKNKAYTGATASNFLLNGVAGTLIVANTFVQRGLGYSSLQAGSLSITYLVMVLIMIRVGEKLLQTLGCKKPMLIGTGVLIVGECLISLTFLPEILYVICCIIGYLFFGLGLGIYATPSTDTAIANAPLEKVGVAAGIYKMASALGGAFGVALSGAVYAIVSNMTNIYTGAMIALWLNAGMGILSFVIILLLVPKQNDTQL.

The next 14 membrane-spanning stretches (helical) occupy residues 17-37 (IGIV…VNVV), 53-73 (IAVS…GGLA), 86-106 (IILN…LLLI), 107-127 (IGRL…LSII), 142-162 (YWSI…GAVA), 165-185 (LGWR…LFLI), 201-221 (FDIK…ILIT), 230-250 (SLLF…FIVL), 273-293 (TASN…NTFV), 299-319 (YSSL…LIMI), 334-354 (PMLI…LTFL), 357-377 (ILYV…LGIY), 403-423 (MASA…YAIV), and 435-455 (IALW…LLLV).

Belongs to the major facilitator superfamily. TCR/Tet family.

Its subcellular location is the cell membrane. Multidrug efflux pump that acts independently of NorA and is one of the factors that confers resistance against diverse quinolones and chemical compounds. Can facilitate bacterial survival in vivo when overexpressed in an abscess and may contribute to the relative resistance of staphylococcal abscesses to antimicrobial therapy. This chain is Quinolone resistance protein NorB (norB), found in Staphylococcus aureus (strain MW2).